A 123-amino-acid polypeptide reads, in one-letter code: Large ribosomal subunit protein uL14 (123 aa).

Belongs to the universal ribosomal protein uL14 family. As to quaternary structure, part of the 50S ribosomal subunit. Forms a cluster with proteins L3 and L19. In the 70S ribosome, L14 and L19 interact and together make contacts with the 16S rRNA in bridges B5 and B8.

Functionally, binds to 23S rRNA. Forms part of two intersubunit bridges in the 70S ribosome. In Actinobacillus pleuropneumoniae serotype 7 (strain AP76), this protein is Large ribosomal subunit protein uL14.